Consider the following 541-residue polypeptide: Malate synthase (541 aa).

Arg-169 serves as the catalytic Proton acceptor. The Proton donor role is filled by Asp-454.

Belongs to the malate synthase family.

It is found in the cytoplasm. It catalyses the reaction glyoxylate + acetyl-CoA + H2O = (S)-malate + CoA + H(+). Its pathway is carbohydrate metabolism; glyoxylate cycle; (S)-malate from isocitrate: step 2/2. This Streptomyces clavuligerus protein is Malate synthase (aceB).